We begin with the raw amino-acid sequence, 526 residues long: Peptide chain release factor 3 (526 aa).

In terms of domain architecture, tr-type G spans 8–277; it reads NKRRTFAIIS…GLTQWAPAPQ (270 aa). Residues 17 to 24, 85 to 89, and 139 to 142 contribute to the GTP site; these read SHPDAGKT, DTPGH, and NKLD.

The protein belongs to the TRAFAC class translation factor GTPase superfamily. Classic translation factor GTPase family. PrfC subfamily.

It localises to the cytoplasm. Functionally, increases the formation of ribosomal termination complexes and stimulates activities of RF-1 and RF-2. It binds guanine nucleotides and has strong preference for UGA stop codons. It may interact directly with the ribosome. The stimulation of RF-1 and RF-2 is significantly reduced by GTP and GDP, but not by GMP. This Histophilus somni (strain 129Pt) (Haemophilus somnus) protein is Peptide chain release factor 3.